The primary structure comprises 202 residues: LexA repressor (202 aa).

The H-T-H motif DNA-binding region spans 28–48 (RAEIAQRLGFRSPNAAEEHLK). Active-site for autocatalytic cleavage activity residues include S119 and K156.

This sequence belongs to the peptidase S24 family. As to quaternary structure, homodimer.

It carries out the reaction Hydrolysis of Ala-|-Gly bond in repressor LexA.. Its function is as follows. Represses a number of genes involved in the response to DNA damage (SOS response), including recA and lexA. Binds to the 16 bp palindromic sequence 5'-CTGTATATATATACAG-3'. In the presence of single-stranded DNA, RecA interacts with LexA causing an autocatalytic cleavage which disrupts the DNA-binding part of LexA, leading to derepression of the SOS regulon and eventually DNA repair. In Cronobacter sakazakii (strain ATCC BAA-894) (Enterobacter sakazakii), this protein is LexA repressor.